The sequence spans 699 residues: Polyribonucleotide nucleotidyltransferase (699 aa).

2 residues coordinate Mg(2+): D493 and D499. In terms of domain architecture, KH spans 560 to 620 (PLIANIEIDP…NKVNQAIEYI (61 aa)). The 68-residue stretch at 630–697 (GDMFEGKITR…DSGRIQLGKA (68 aa)) folds into the S1 motif domain.

Belongs to the polyribonucleotide nucleotidyltransferase family. It depends on Mg(2+) as a cofactor.

It localises to the cytoplasm. The catalysed reaction is RNA(n+1) + phosphate = RNA(n) + a ribonucleoside 5'-diphosphate. Its function is as follows. Involved in mRNA degradation. Catalyzes the phosphorolysis of single-stranded polyribonucleotides processively in the 3'- to 5'-direction. The protein is Polyribonucleotide nucleotidyltransferase of Thermosipho melanesiensis (strain DSM 12029 / CIP 104789 / BI429).